A 102-amino-acid polypeptide reads, in one-letter code: NADH-quinone oxidoreductase subunit K (102 aa).

The next 3 membrane-spanning stretches (helical) occupy residues 6–26, 30–50, and 62–82; these read LEHGLAVAGILFCLGLVGLMV, ILFVLMSLEIMMNAAALAFIV, and VMFILVISLAAAEASIGLAIL.

Belongs to the complex I subunit 4L family. As to quaternary structure, NDH-1 is composed of 13 different subunits. Subunits NuoA, H, J, K, L, M, N constitute the membrane sector of the complex.

It localises to the cell inner membrane. The enzyme catalyses a quinone + NADH + 5 H(+)(in) = a quinol + NAD(+) + 4 H(+)(out). NDH-1 shuttles electrons from NADH, via FMN and iron-sulfur (Fe-S) centers, to quinones in the respiratory chain. The immediate electron acceptor for the enzyme in this species is believed to be ubiquinone. Couples the redox reaction to proton translocation (for every two electrons transferred, four hydrogen ions are translocated across the cytoplasmic membrane), and thus conserves the redox energy in a proton gradient. This Pseudomonas fluorescens (strain SBW25) protein is NADH-quinone oxidoreductase subunit K.